The chain runs to 148 residues: Endoribonuclease YbeY (148 aa).

The Zn(2+) site is built by His113, His117, and His123.

This sequence belongs to the endoribonuclease YbeY family. Zn(2+) serves as cofactor.

It is found in the cytoplasm. Single strand-specific metallo-endoribonuclease involved in late-stage 70S ribosome quality control and in maturation of the 3' terminus of the 16S rRNA. This chain is Endoribonuclease YbeY, found in Borrelia recurrentis (strain A1).